The sequence spans 67 residues: Large ribosomal subunit protein bL35 (67 aa).

Residues 1-16 are compositionally biased toward basic residues; sequence MPKMKTKSSAKKRFRV. The tract at residues 1-23 is disordered; the sequence is MPKMKTKSSAKKRFRVRPGGTVK.

It belongs to the bacterial ribosomal protein bL35 family.

This Variovorax paradoxus (strain S110) protein is Large ribosomal subunit protein bL35.